We begin with the raw amino-acid sequence, 212 residues long: Adenylate kinase (212 aa).

10–15 (GAGKGT) contributes to the ATP binding site. Positions 30–59 (STGDMFRAAMVNQTEMGVLAKSYIDKGELV) are NMP. Residues Thr-31, Arg-36, 57–59 (ELV), 86–89 (GYPR), and Gln-93 contribute to the AMP site. The segment at 127 to 159 (GRIIHRVTGETFHKVFNPPVDYKEEDYYQREDD) is LID. ATP is bound by residues Arg-128 and 137–138 (TF). AMP is bound by residues Arg-156 and Arg-167. Residue Gln-195 participates in ATP binding.

The protein belongs to the adenylate kinase family. In terms of assembly, monomer.

It localises to the cytoplasm. It catalyses the reaction AMP + ATP = 2 ADP. It participates in purine metabolism; AMP biosynthesis via salvage pathway; AMP from ADP: step 1/1. Catalyzes the reversible transfer of the terminal phosphate group between ATP and AMP. Plays an important role in cellular energy homeostasis and in adenine nucleotide metabolism. This chain is Adenylate kinase, found in Streptococcus pneumoniae (strain 70585).